A 182-amino-acid polypeptide reads, in one-letter code: Peptidyl-tRNA hydrolase (182 aa).

Tyrosine 14 contributes to the tRNA binding site. The active-site Proton acceptor is the histidine 19. TRNA contacts are provided by phenylalanine 64, asparagine 66, and asparagine 112.

It belongs to the PTH family. Monomer.

Its subcellular location is the cytoplasm. It catalyses the reaction an N-acyl-L-alpha-aminoacyl-tRNA + H2O = an N-acyl-L-amino acid + a tRNA + H(+). Its function is as follows. Hydrolyzes ribosome-free peptidyl-tRNAs (with 1 or more amino acids incorporated), which drop off the ribosome during protein synthesis, or as a result of ribosome stalling. Catalyzes the release of premature peptidyl moieties from peptidyl-tRNA molecules trapped in stalled 50S ribosomal subunits, and thus maintains levels of free tRNAs and 50S ribosomes. This Wolbachia sp. subsp. Brugia malayi (strain TRS) protein is Peptidyl-tRNA hydrolase.